We begin with the raw amino-acid sequence, 97 residues long: Peptide YY (97 aa).

The N-terminal stretch at 1-28 is a signal peptide; sequence MVFVRRPWPALTTVLLALLVCLGALVDA. S41 carries the post-translational modification Phosphoserine. Y64 bears the Tyrosine amide mark. Positions 65-97 are disordered; that stretch reads GKRDGPDTLLSKTFFPDGEDRPVRSRSEGPDLW. Positions 68–97 are excised as a propeptide; sequence DGPDTLLSKTFFPDGEDRPVRSRSEGPDLW. The segment covering 82–97 has biased composition (basic and acidic residues); it reads GEDRPVRSRSEGPDLW.

Belongs to the NPY family. In terms of processing, the peptide YY form is cleaved at Pro-30 by the prolyl endopeptidase FAP (seprase) activity (in vitro) to generate peptide YY(3-36).

The protein resides in the secreted. In terms of biological role, this gut peptide inhibits exocrine pancreatic secretion, has a vasoconstrictory action and inhibitis jejunal and colonic mobility. The chain is Peptide YY (PYY) from Homo sapiens (Human).